Reading from the N-terminus, the 152-residue chain is UPF0225 protein YchJ (152 aa).

The protein belongs to the UPF0225 family.

This chain is UPF0225 protein YchJ, found in Escherichia coli O127:H6 (strain E2348/69 / EPEC).